The primary structure comprises 484 residues: Ribosomal protein uS12 methylthiotransferase RimO (484 aa).

Positions 8-119 (RRVAMVTLGC…LAERLDDVLA (112 aa)) constitute an MTTase N-terminal domain. Residues cysteine 17, cysteine 53, cysteine 82, cysteine 184, cysteine 188, and cysteine 191 each contribute to the [4Fe-4S] cluster site. One can recognise a Radical SAM core domain in the interval 170-401 (LDDSPLAALK…ALADELVAQR (232 aa)). Residues 403–469 (EDRVGTEVRV…GVDLVVRPVG (67 aa)) enclose the TRAM domain.

It belongs to the methylthiotransferase family. RimO subfamily. [4Fe-4S] cluster is required as a cofactor.

The protein resides in the cytoplasm. It catalyses the reaction L-aspartate(89)-[ribosomal protein uS12]-hydrogen + (sulfur carrier)-SH + AH2 + 2 S-adenosyl-L-methionine = 3-methylsulfanyl-L-aspartate(89)-[ribosomal protein uS12]-hydrogen + (sulfur carrier)-H + 5'-deoxyadenosine + L-methionine + A + S-adenosyl-L-homocysteine + 2 H(+). Catalyzes the methylthiolation of an aspartic acid residue of ribosomal protein uS12. The polypeptide is Ribosomal protein uS12 methylthiotransferase RimO (Saccharopolyspora erythraea (strain ATCC 11635 / DSM 40517 / JCM 4748 / NBRC 13426 / NCIMB 8594 / NRRL 2338)).